Here is a 181-residue protein sequence, read N- to C-terminus: Ankyrin repeat-containing protein YGL242C (181 aa).

Position 1 is an N-acetylmethionine (methionine 1). 2 ANK repeats span residues 49–78 and 85–120; these read LGNTALHLCCKYGSWEVLDKILDQDGEIEI and DGDTPLHVTVRYSQEEPEHGTFIARNLIEVGADPRV. Positions 151-181 are disordered; the sequence is IDSTNGSGDNNEDGEMIDDGPSDDDEEDDKK. Acidic residues predominate over residues 160-181; the sequence is NNEDGEMIDDGPSDDDEEDDKK. Residue serine 172 is modified to Phosphoserine.

The polypeptide is Ankyrin repeat-containing protein YGL242C (Saccharomyces cerevisiae (strain ATCC 204508 / S288c) (Baker's yeast)).